The primary structure comprises 256 residues: MASLYFVTGTDTEVGKTYCTAKTVERMRECGQRVGVYKPVASGCELRADGQRYSVDAATLWQAAGRPKNIDAVCPQRFLAALSPPQSAAREGVKVDTRQLRDGLAIWCDGDFDVVMIEGAGGLFSPISDDWLNVDLAIEMKRWSDQNGHSFELLLVAPDRLGVLHHVISTSRAAESAGIPIAGLILNRMDDHADESTQTNAEDLRRWCGIPMVASVRQPSGPLVVFSGPNGRNASGETSRETAGGVNFLNQTTIRR.

13 to 18 (EVGKTY) serves as a coordination point for ATP. Threonine 17 is a Mg(2+) binding site. The active site involves lysine 38. A substrate-binding site is contributed by serine 42. ATP-binding positions include aspartate 56, 118–121 (EGAG), and 187–188 (NR). Residues aspartate 56 and glutamate 118 each coordinate Mg(2+).

This sequence belongs to the dethiobiotin synthetase family. Homodimer. The cofactor is Mg(2+).

It is found in the cytoplasm. It carries out the reaction (7R,8S)-7,8-diammoniononanoate + CO2 + ATP = (4R,5S)-dethiobiotin + ADP + phosphate + 3 H(+). It functions in the pathway cofactor biosynthesis; biotin biosynthesis; biotin from 7,8-diaminononanoate: step 1/2. In terms of biological role, catalyzes a mechanistically unusual reaction, the ATP-dependent insertion of CO2 between the N7 and N8 nitrogen atoms of 7,8-diaminopelargonic acid (DAPA, also called 7,8-diammoniononanoate) to form a ureido ring. This chain is ATP-dependent dethiobiotin synthetase BioD, found in Rhodopirellula baltica (strain DSM 10527 / NCIMB 13988 / SH1).